We begin with the raw amino-acid sequence, 512 residues long: Glycerol kinase 2 (512 aa).

Residue threonine 18 coordinates ADP. Residues threonine 18, threonine 19, and serine 20 each coordinate ATP. Residue threonine 18 coordinates sn-glycerol 3-phosphate. Arginine 22 serves as a coordination point for ADP. 4 residues coordinate sn-glycerol 3-phosphate: arginine 88, glutamate 89, tyrosine 140, and aspartate 255. Glycerol-binding residues include arginine 88, glutamate 89, tyrosine 140, aspartate 255, and glutamine 256. Residues threonine 277 and glycine 321 each coordinate ADP. Threonine 277, glycine 321, glutamine 325, and glycine 422 together coordinate ATP. ADP contacts are provided by glycine 422 and asparagine 426.

This sequence belongs to the FGGY kinase family.

It carries out the reaction glycerol + ATP = sn-glycerol 3-phosphate + ADP + H(+). It functions in the pathway polyol metabolism; glycerol degradation via glycerol kinase pathway; sn-glycerol 3-phosphate from glycerol: step 1/1. Inhibited by fructose 1,6-bisphosphate (FBP). Functionally, key enzyme in the regulation of glycerol uptake and metabolism. Catalyzes the phosphorylation of glycerol to yield sn-glycerol 3-phosphate. This Streptomyces coelicolor (strain ATCC BAA-471 / A3(2) / M145) protein is Glycerol kinase 2.